The primary structure comprises 94 residues: Large ribosomal subunit protein bL25 (94 aa).

Belongs to the bacterial ribosomal protein bL25 family. Part of the 50S ribosomal subunit; part of the 5S rRNA/L5/L18/L25 subcomplex. Contacts the 5S rRNA. Binds to the 5S rRNA independently of L5 and L18.

In terms of biological role, this is one of the proteins that binds to the 5S RNA in the ribosome where it forms part of the central protuberance. The protein is Large ribosomal subunit protein bL25 of Serratia proteamaculans (strain 568).